Here is a 180-residue protein sequence, read N- to C-terminus: Ribosome-recycling factor (180 aa).

The protein belongs to the RRF family.

It localises to the cytoplasm. Responsible for the release of ribosomes from messenger RNA at the termination of protein biosynthesis. May increase the efficiency of translation by recycling ribosomes from one round of translation to another. The sequence is that of Ribosome-recycling factor from Chlamydia caviae (strain ATCC VR-813 / DSM 19441 / 03DC25 / GPIC) (Chlamydophila caviae).